The primary structure comprises 919 residues: Puromycin-sensitive aminopeptidase (919 aa).

Residues E180 and 316-320 (GAMEN) contribute to the substrate site. Position 352 (H352) interacts with Zn(2+). The active-site Proton acceptor is E353. The Zn(2+) site is built by H356 and E375. Y464 bears the 3'-nitrotyrosine mark. The Nuclear localization signal signature appears at 726–730 (RRRFK).

The protein belongs to the peptidase M1 family. As to quaternary structure, monomer. Zn(2+) serves as cofactor. In terms of tissue distribution, detected in liver, epithelium of renal tubules, epithelium of small and large intestine, gastric epithelial cells, and alveoli of the lung (at protein level).

The protein localises to the cytoplasm. It localises to the cytosol. It is found in the nucleus. The enzyme catalyses Release of an N-terminal amino acid, preferentially alanine, from a wide range of peptides, amides and arylamides.. Strongly inhibited by bestatin, leuhistin, actinonin, amastatin, 1,10-phenanthroline, DFP, PCMBS, Zn(2+), Cd(2+), Co(2+), Cu(2+), Hg(2+), EDTA and puromycin. Not inhibited by PMSF, and only slightly inhibited by leupeptin and aprotinin. Activity is increased by Mg(2+) and Ca(2+). Aminopeptidase with broad substrate specificity for several peptides. Involved in proteolytic events essential for cell growth and viability. May act as regulator of neuropeptide activity. Plays a role in the antigen-processing pathway for MHC class I molecules. Involved in the N-terminal trimming of cytotoxic T-cell epitope precursors. Digests the poly-Q peptides found in many cellular proteins. Digests tau from normal brain more efficiently than tau from Alzheimer disease brain. The polypeptide is Puromycin-sensitive aminopeptidase (NPEPPS) (Homo sapiens (Human)).